The sequence spans 586 residues: Lipoprotein LpqB (586 aa).

The N-terminal stretch at 1–17 is a signal peptide; the sequence is MVRSVFALVFAAVLLGG. C18 is lipidated: N-palmitoyl cysteine. The S-diacylglycerol cysteine moiety is linked to residue C18. Positions 26–45 are disordered; sequence APQAIGTVERPAPSNLPKPI.

The protein belongs to the LpqB lipoprotein family.

The protein resides in the cell membrane. The chain is Lipoprotein LpqB from Mycobacterium ulcerans (strain Agy99).